The primary structure comprises 131 residues: L-ectoine synthase (131 aa).

Belongs to the ectoine synthase family.

The catalysed reaction is (2S)-4-acetamido-2-aminobutanoate = L-ectoine + H2O. Its pathway is amine and polyamine biosynthesis; ectoine biosynthesis; L-ectoine from L-aspartate 4-semialdehyde: step 3/3. Catalyzes the circularization of gamma-N-acetyl-alpha,gamma-diaminobutyric acid (ADABA) to ectoine (1,4,5,6-tetrahydro-2-methyl-4-pyrimidine carboxylic acid), which is an excellent osmoprotectant. This Nocardia farcinica (strain IFM 10152) protein is L-ectoine synthase.